A 303-amino-acid polypeptide reads, in one-letter code: Deoxyhypusine hydroxylase (303 aa).

Residue M1 is modified to N-acetylmethionine. 6 HEAT-like PBS-type repeats span residues 23 to 49 (ARFRALFTLRGLGGPVAISWISRAFDD), 54 to 80 (LKHELAYCLGQMQDRRAIPVLLDVLRD), 87 to 113 (VRHEAGEALGAIGDPEVLEILKQYSTD), 175 to 201 (DRYRAMFALRDAGGKEAALALAEGLRC), 206 to 232 (FRHEIGYVLGQMQHEAAVPQLAAALAQ), and 239 to 265 (VRHECAEALGAIARPACLAALRAHVAD). 3 residues coordinate Fe cation: H56, H89, and E90. Fe cation is bound by residues H208, H241, and E242.

It belongs to the deoxyhypusine hydroxylase family. Fe(2+) is required as a cofactor.

It catalyses the reaction [eIF5A protein]-deoxyhypusine + AH2 + O2 = [eIF5A protein]-hypusine + A + H2O. It participates in protein modification; eIF5A hypusination. Its function is as follows. Catalyzes the hydroxylation of the N(6)-(4-aminobutyl)-L-lysine intermediate produced by deoxyhypusine synthase/DHPS on a critical lysine of the eukaryotic translation initiation factor 5A/eIF-5A. This is the second step of the post-translational modification of that lysine into an unusual amino acid residue named hypusine. Hypusination is unique to mature eIF-5A factor and is essential for its function. The sequence is that of Deoxyhypusine hydroxylase from Bos taurus (Bovine).